The following is a 362-amino-acid chain: Very-long-chain (3R)-3-hydroxyacyl-CoA dehydratase 3 (362 aa).

At M1 the chain carries N-acetylmethionine. At 1–149 (METQVLTPHV…ETLTNLKKGY (149 aa)) the chain is on the cytoplasmic side. The 90-residue stretch at 5 to 94 (VLTPHVYWAQ…KGSHWWERLT (90 aa)) folds into the CS domain. T7 bears the Phosphothreonine mark. Residues 111-138 (LDESDAEMELRAKEEERLNKLRLEREGS) adopt a coiled-coil conformation. Position 114 is a phosphoserine (S114). A helical membrane pass occupies residues 150–170 (LFMYNLVQLLGFSWIFVNLTV). Residues 171–189 (RFFILGKESFYDTFHNVAD) lie on the Lumenal side of the membrane. The chain crosses the membrane as a helical span at residues 190 to 210 (MMYFCQMLALVETLNAAIGVT). At 211–212 (ST) the chain is on the cytoplasmic side. The helical transmembrane segment at 213 to 233 (PVLPALIQFLGRNFILFLVFG) threads the bilayer. Residues 234–242 (TMEEMQNKA) are Lumenal-facing. Residues 243-263 (VVFFVFYSWSAIEIFRYPFYM) traverse the membrane as a helical segment. The Cytoplasmic portion of the chain corresponds to 264 to 280 (LSCIDMDWKVLTWLRYT). Residues 281–301 (MWIPLYPLGCLSEAVAVIQSI) form a helical membrane-spanning segment. Active-site residues include Y286 and E293. Residues 302–322 (PVFNESGRFSFTLPYPVKMKV) are Lumenal-facing. A helical membrane pass occupies residues 323 to 343 (RFSFFLQVYLVMLFLGLYINF). The Cytoplasmic segment spans residues 344-362 (RHLYKQRRRRYGQKKKKLH).

It belongs to the very long-chain fatty acids dehydratase HACD family. As to quaternary structure, may interact with enzymes of the ELO family (including ELOVL1); with those enzymes that mediate condensation, the first of the four steps of the reaction cycle responsible for fatty acids elongation, may be part of a larger fatty acids elongase complex. Interacts with RAC1. Associates with internalized insulin receptor/INSR complexes on Golgi/endosomal membranes; HACD3/PTPLAD1 together with ATIC and PRKAA2/AMPK2 is proposed to be part of a signaling network regulating INSR autophosphorylation and endocytosis.

It localises to the endoplasmic reticulum membrane. The catalysed reaction is a very-long-chain (3R)-3-hydroxyacyl-CoA = a very-long-chain (2E)-enoyl-CoA + H2O. The enzyme catalyses (3R)-hydroxyhexadecanoyl-CoA = (2E)-hexadecenoyl-CoA + H2O. It participates in lipid metabolism; fatty acid biosynthesis. Catalyzes the third of the four reactions of the long-chain fatty acids elongation cycle. This endoplasmic reticulum-bound enzymatic process, allows the addition of two carbons to the chain of long- and very long-chain fatty acids/VLCFAs per cycle. This enzyme catalyzes the dehydration of the 3-hydroxyacyl-CoA intermediate into trans-2,3-enoyl-CoA, within each cycle of fatty acid elongation. Thereby, it participates in the production of VLCFAs of different chain lengths that are involved in multiple biological processes as precursors of membrane lipids and lipid mediators. Involved in Rac1-signaling pathways leading to the modulation of gene expression. Promotes insulin receptor/INSR autophosphorylation and is involved in INSR internalization. The polypeptide is Very-long-chain (3R)-3-hydroxyacyl-CoA dehydratase 3 (Mus musculus (Mouse)).